We begin with the raw amino-acid sequence, 195 residues long: Peptidyl-tRNA hydrolase (195 aa).

Position 18 (tyrosine 18) interacts with tRNA. Residue histidine 23 is the Proton acceptor of the active site. Residues phenylalanine 69, asparagine 71, and asparagine 117 each contribute to the tRNA site.

The protein belongs to the PTH family. As to quaternary structure, monomer.

The protein localises to the cytoplasm. The catalysed reaction is an N-acyl-L-alpha-aminoacyl-tRNA + H2O = an N-acyl-L-amino acid + a tRNA + H(+). Hydrolyzes ribosome-free peptidyl-tRNAs (with 1 or more amino acids incorporated), which drop off the ribosome during protein synthesis, or as a result of ribosome stalling. Functionally, catalyzes the release of premature peptidyl moieties from peptidyl-tRNA molecules trapped in stalled 50S ribosomal subunits, and thus maintains levels of free tRNAs and 50S ribosomes. This chain is Peptidyl-tRNA hydrolase, found in Hahella chejuensis (strain KCTC 2396).